Reading from the N-terminus, the 87-residue chain is Phytosulfokines 1 (87 aa).

An N-terminal signal peptide occupies residues 1 to 24 (MMKTKSEVLIFFFTLVLLLSMASS). The propeptide occupies 25–76 (VILREDGFAPPKPSPTTHEKASTKGDRDGVECKNSDSEEECLVKKTVAAHTD). Residues 31-59 (GFAPPKPSPTTHEKASTKGDRDGVECKNS) form a disordered region. A compositionally biased stretch (basic and acidic residues) spans 41-59 (THEKASTKGDRDGVECKNS). Sulfotyrosine is present on residues tyrosine 77 and tyrosine 79. Residues 82-87 (DLNLSP) constitute a propeptide that is removed on maturation.

This sequence belongs to the phytosulfokine family. In terms of processing, sulfation is important for activity and for the binding to a putative membrane receptor. Post-translationally, PSK-beta is produced from PSK-alpha by exopeptidase digestion. Expressed only in roots.

The protein localises to the secreted. Promotes plant cell differentiation, organogenesis and somatic embryogenesis as well as cell proliferation. The sequence is that of Phytosulfokines 1 (PSK1) from Arabidopsis thaliana (Mouse-ear cress).